The following is a 127-amino-acid chain: Glycine cleavage system H protein (127 aa).

The Lipoyl-binding domain occupies Glu-22–Glu-104. At Lys-63 the chain carries N6-lipoyllysine.

This sequence belongs to the GcvH family. As to quaternary structure, the glycine cleavage system is composed of four proteins: P, T, L and H. (R)-lipoate is required as a cofactor.

The glycine cleavage system catalyzes the degradation of glycine. The H protein shuttles the methylamine group of glycine from the P protein to the T protein. Functionally, is also involved in protein lipoylation via its role as an octanoyl/lipoyl carrier protein intermediate. The protein is Glycine cleavage system H protein of Bacillus cereus (strain ZK / E33L).